The primary structure comprises 199 residues: UPF0301 protein Daci_1578 (199 aa).

This sequence belongs to the UPF0301 (AlgH) family.

This Delftia acidovorans (strain DSM 14801 / SPH-1) protein is UPF0301 protein Daci_1578.